A 1073-amino-acid chain; its full sequence is Self-sufficient cytochrome P450 monooxygenase CYP505AG1 (1073 aa).

C409 is a binding site for heme. The 144-residue stretch at 501-644 folds into the Flavodoxin-like domain; the sequence is VTILYGSNSG…DLENWEDEHL (144 aa). Residues 507–511 and 588–620 each bind FMN; these read SNSGT and VFACGHHDWAKTFYKVPIMIDELLARAGAHRVA. In terms of domain architecture, FAD-binding FR-type spans 680–909; it reads HNAVECIVSE…RPCKKQFHLP (230 aa).

It in the N-terminal section; belongs to the cytochrome P450 family. The cofactor is FAD. FMN is required as a cofactor. It depends on heme as a cofactor.

It catalyses the reaction 2 oxidized [cytochrome P450] + NADPH = 2 reduced [cytochrome P450] + NADP(+) + H(+). The catalysed reaction is an organic molecule + reduced [NADPH--hemoprotein reductase] + O2 = an alcohol + oxidized [NADPH--hemoprotein reductase] + H2O + H(+). It carries out the reaction dodecanoate + reduced [NADPH--hemoprotein reductase] + O2 = 10-hydroxydodecanoate + oxidized [NADPH--hemoprotein reductase] + H2O + H(+). The enzyme catalyses tetradecanoate + reduced [NADPH--hemoprotein reductase] + O2 = 12-hydroxytetradecanoate + oxidized [NADPH--hemoprotein reductase] + H2O + H(+). Self-sufficient cytochrome P450 monooxygenase that catalyzes the regioselective in-chain hydroxylation of alkanes, fatty alcohols, and fatty acids, giving sub-terminal hydroxylation by acting preferentially on the omega-2 position. Prefers fatty acids as substrates, since it hydroxylates the small amounts of dodecanoic acid formed in the presence of an excess of 1-dodecanol. This is Self-sufficient cytochrome P450 monooxygenase CYP505AG1 from Oidiodendron maius (strain Zn).